The following is a 322-amino-acid chain: Mas-related G-protein coupled receptor member X4 (322 aa).

The Extracellular portion of the chain corresponds to 1 to 31 (MDPTVPVFGTKLTPINGREETPCYNQTLSFT). Residue Asn25 is glycosylated (N-linked (GlcNAc...) asparagine). The chain crosses the membrane as a helical span at residues 32-52 (VLTCIISLVGLTGNAVVLWLL). Topologically, residues 53-60 (GYRMRRNA) are cytoplasmic. A helical membrane pass occupies residues 61–81 (VSIYILNLAAADFLFLSFQII). Topologically, residues 82 to 96 (RLPLRLINISHLIRK) are extracellular. Asn89 is a glycosylation site (N-linked (GlcNAc...) asparagine). The chain crosses the membrane as a helical span at residues 97 to 117 (ILVSVMTFPYFTGLSMLSAIS). Residues 118-137 (TERCLSVLWPIWYRCRRPTH) lie on the Cytoplasmic side of the membrane. The helical transmembrane segment at 138 to 158 (LSAVVCVLLWGLSLLFSMLEW) threads the bilayer. Topologically, residues 159–177 (RFCDFLFSGADSSWCETSD) are extracellular. A helical transmembrane segment spans residues 178 to 198 (FIPVAWLIFLCVVLCVSSLVL). Residues 199–218 (LVRILCGSRKMPLTRLYVTI) lie on the Cytoplasmic side of the membrane. The helical transmembrane segment at 219–239 (LLTVLVFLLCGLPFGILGALI) threads the bilayer. The Extracellular portion of the chain corresponds to 240–254 (YRMHLNLEVLYCHVY). The chain crosses the membrane as a helical span at residues 255–275 (LVCMSLSSLNSSANPIIYFFV). Residues 276-322 (GSFRQRQNRQNLKLVLQRALQDKPEVDKGEGQLPEESLELSGSRLGP) lie on the Cytoplasmic side of the membrane. The segment at 299–322 (PEVDKGEGQLPEESLELSGSRLGP) is disordered.

It belongs to the G-protein coupled receptor 1 family. Mas subfamily. Uniquely localized in a subset of small dorsal root and trigeminal sensory neurons.

Its subcellular location is the cell membrane. Its function is as follows. Orphan receptor. Probably involved in the function of nociceptive neurons. May regulate nociceptor function and/or development, including the sensation or modulation of pain. Potently activated by enkephalins. This is Mas-related G-protein coupled receptor member X4 (MRGPRX4) from Homo sapiens (Human).